A 438-amino-acid chain; its full sequence is Serine hydroxymethyltransferase 1 (438 aa).

Residues leucine 130 and 134 to 136 contribute to the (6S)-5,6,7,8-tetrahydrofolate site; that span reads GHL. Residue lysine 239 is modified to N6-(pyridoxal phosphate)lysine.

The protein belongs to the SHMT family. As to quaternary structure, homodimer. Pyridoxal 5'-phosphate serves as cofactor.

The protein resides in the cytoplasm. It carries out the reaction (6R)-5,10-methylene-5,6,7,8-tetrahydrofolate + glycine + H2O = (6S)-5,6,7,8-tetrahydrofolate + L-serine. It functions in the pathway one-carbon metabolism; tetrahydrofolate interconversion. Its pathway is amino-acid biosynthesis; glycine biosynthesis; glycine from L-serine: step 1/1. Its function is as follows. Catalyzes the reversible interconversion of serine and glycine with tetrahydrofolate (THF) serving as the one-carbon carrier. This reaction serves as the major source of one-carbon groups required for the biosynthesis of purines, thymidylate, methionine, and other important biomolecules. Also exhibits THF-independent aldolase activity toward beta-hydroxyamino acids, producing glycine and aldehydes, via a retro-aldol mechanism. The chain is Serine hydroxymethyltransferase 1 from Mycobacterium tuberculosis (strain CDC 1551 / Oshkosh).